The chain runs to 486 residues: Cardiolipin synthase A (486 aa).

2 helical membrane-spanning segments follow: residues 3-23 (TFYTVVSWLVILGYWLLIAGV) and 38-58 (MAWLLIIYILPLVGIIAYLSF). PLD phosphodiesterase domains follow at residues 219–246 (MDLRQHRKMIMIDNYIAYTGSMNMVDPR) and 399–426 (EGGLLHTKSVLVDGELSLVGTVNLDMRS). Catalysis depends on residues His224, Lys226, Asp231, His404, Lys406, and Asp411.

The protein belongs to the phospholipase D family. Cardiolipin synthase subfamily. ClsA sub-subfamily.

Its subcellular location is the cell inner membrane. The enzyme catalyses 2 a 1,2-diacyl-sn-glycero-3-phospho-(1'-sn-glycerol) = a cardiolipin + glycerol. Its function is as follows. Catalyzes the reversible phosphatidyl group transfer from one phosphatidylglycerol molecule to another to form cardiolipin (CL) (diphosphatidylglycerol) and glycerol. The chain is Cardiolipin synthase A from Escherichia fergusonii (strain ATCC 35469 / DSM 13698 / CCUG 18766 / IAM 14443 / JCM 21226 / LMG 7866 / NBRC 102419 / NCTC 12128 / CDC 0568-73).